We begin with the raw amino-acid sequence, 89 residues long: UPF0297 protein MGAS9429_Spy1808 (89 aa).

Belongs to the UPF0297 family.

The protein is UPF0297 protein MGAS9429_Spy1808 of Streptococcus pyogenes serotype M12 (strain MGAS9429).